A 421-amino-acid polypeptide reads, in one-letter code: Trimethyllysine dioxygenase, mitochondrial (421 aa).

A mitochondrion-targeting transit peptide spans 1–15 (MWYHKLLHQQSRLRN). Residues lysine 179 and lysine 236 each carry the N6-acetyllysine modification. Fe cation is bound by residues histidine 242, aspartate 244, and histidine 389.

This sequence belongs to the gamma-BBH/TMLD family. In terms of assembly, homodimer. Fe(2+) serves as cofactor. The cofactor is L-ascorbate.

The protein localises to the mitochondrion matrix. The enzyme catalyses N(6),N(6),N(6)-trimethyl-L-lysine + 2-oxoglutarate + O2 = (3S)-3-hydroxy-N(6),N(6),N(6)-trimethyl-L-lysine + succinate + CO2. The protein operates within amine and polyamine biosynthesis; carnitine biosynthesis. Its function is as follows. Converts trimethyllysine (TML) into hydroxytrimethyllysine (HTML). In Mus musculus (Mouse), this protein is Trimethyllysine dioxygenase, mitochondrial (Tmlhe).